The chain runs to 459 residues: tRNA-guanine(15) transglycosylase (459 aa).

The active-site Nucleophile is the D90. Residues D125 and G192 each coordinate substrate. Zn(2+)-binding residues include C275, C277, and C280.

It belongs to the archaeosine tRNA-ribosyltransferase family. Zn(2+) serves as cofactor.

The enzyme catalyses guanosine(15) in tRNA + 7-cyano-7-deazaguanine = 7-cyano-7-carbaguanosine(15) in tRNA + guanine. Its pathway is tRNA modification; archaeosine-tRNA biosynthesis. Exchanges the guanine residue with 7-cyano-7-deazaguanine (preQ0) at position 15 in the dihydrouridine loop (D-loop) of archaeal tRNAs. This Methanopyrus kandleri (strain AV19 / DSM 6324 / JCM 9639 / NBRC 100938) protein is tRNA-guanine(15) transglycosylase.